The following is a 552-amino-acid chain: Urocanate hydratase (552 aa).

Residues 49–50, glutamine 127, 173–175, glutamate 193, arginine 198, 239–240, 260–264, 270–271, and tyrosine 319 contribute to the NAD(+) site; these read GG, GMG, NA, QTSAH, and YV. The active site involves cysteine 407. Glycine 489 contacts NAD(+).

It belongs to the urocanase family. In terms of assembly, composed of at least two subunits. NAD(+) is required as a cofactor.

The protein resides in the cytoplasm. The enzyme catalyses 4-imidazolone-5-propanoate = trans-urocanate + H2O. The protein operates within amino-acid degradation; L-histidine degradation into L-glutamate; N-formimidoyl-L-glutamate from L-histidine: step 2/3. In terms of biological role, catalyzes the conversion of urocanate to 4-imidazolone-5-propionate. The protein is Urocanate hydratase of Bacillus subtilis (strain 168).